Consider the following 156-residue polypeptide: Small ribosomal subunit protein uS7 (156 aa).

It belongs to the universal ribosomal protein uS7 family. In terms of assembly, part of the 30S ribosomal subunit. Contacts proteins S9 and S11.

In terms of biological role, one of the primary rRNA binding proteins, it binds directly to 16S rRNA where it nucleates assembly of the head domain of the 30S subunit. Is located at the subunit interface close to the decoding center, probably blocks exit of the E-site tRNA. The polypeptide is Small ribosomal subunit protein uS7 (Mannheimia succiniciproducens (strain KCTC 0769BP / MBEL55E)).